We begin with the raw amino-acid sequence, 119 residues long: MMIKIAVVLCAVMATTMVRAKYVEEQELADLLDLLISEEVSSPDDAVALQGWWRRTVDKVRNAGRKVAGFASKACGALGHSPQEARAKVLEAFPEMKEADLDEEDIGKYCGYAHALNGR.

The N-terminal stretch at 1-20 is a signal peptide; the sequence is MMIKIAVVLCAVMATTMVRA. Residues 21-50 constitute a propeptide that is removed on maturation; the sequence is KYVEEQELADLLDLLISEEVSSPDDAVALQ. 2 positions are modified to 6'-bromotryptophan: W52 and W53. A disulfide bridge links C75 with C110. Positions 81–104 are excised as a propeptide; the sequence is SPQEARAKVLEAFPEMKEADLDEE. Asparagine amide is present on N117.

In terms of assembly, heterodimer of a light and a heavy chain, probably disulfide-linked.

In terms of biological role, has antimicrobial activity against Gram-negative bacteria, Gram-positive bacteria and against fungi with minimum inhibitory concentration (MIC) between 0.78 uM and 50 uM. Shows little hemolytic activity even at a concentration of 100 uM. Functionally, has no antimicrobial activity. Shows no hemolytic activity. This is Centrocin 1 from Echinus esculentus (Sea urchin).